The chain runs to 347 residues: S-adenosylmethionine:tRNA ribosyltransferase-isomerase (347 aa).

This sequence belongs to the QueA family. In terms of assembly, monomer.

The protein resides in the cytoplasm. It carries out the reaction 7-aminomethyl-7-carbaguanosine(34) in tRNA + S-adenosyl-L-methionine = epoxyqueuosine(34) in tRNA + adenine + L-methionine + 2 H(+). Its pathway is tRNA modification; tRNA-queuosine biosynthesis. In terms of biological role, transfers and isomerizes the ribose moiety from AdoMet to the 7-aminomethyl group of 7-deazaguanine (preQ1-tRNA) to give epoxyqueuosine (oQ-tRNA). The protein is S-adenosylmethionine:tRNA ribosyltransferase-isomerase of Streptococcus thermophilus (strain ATCC BAA-491 / LMD-9).